Reading from the N-terminus, the 79-residue chain is Acyl carrier protein (79 aa).

Residues 2-77 (STIEERVKKI…QAIDYVKVHV (76 aa)) enclose the Carrier domain. Residue Ser37 is modified to O-(pantetheine 4'-phosphoryl)serine.

It belongs to the acyl carrier protein (ACP) family. 4'-phosphopantetheine is transferred from CoA to a specific serine of apo-ACP by AcpS. This modification is essential for activity because fatty acids are bound in thioester linkage to the sulfhydryl of the prosthetic group.

The protein localises to the cytoplasm. It participates in lipid metabolism; fatty acid biosynthesis. In terms of biological role, carrier of the growing fatty acid chain in fatty acid biosynthesis. This Xanthomonas albilineans protein is Acyl carrier protein.